Reading from the N-terminus, the 464-residue chain is Protein VAPYRIN-LIKE (464 aa).

The MSP domain occupies Arg3–Val124. ANK repeat units lie at residues Asn153–Phe182, Asn186–Asp215, Val217–Val246, Glu252–Ala281, Arg285–Ala314, Asn318–Ala347, Arg349–Arg368, Asn372–Ser401, and Ala405–Leu435.

Expressed in roots.

The protein resides in the cytoplasm. The protein localises to the nucleus. It is found in the cell membrane. Functionally, may be involved in arbuscular mycorrhizal (AM) symbiosis with AM fungi and in nitrogen-fixing rhizobial bacteria symbiosis leading to the formation of root nodules. In Medicago truncatula (Barrel medic), this protein is Protein VAPYRIN-LIKE.